The primary structure comprises 350 residues: MERSLDSLAGMAKSAFGAGTSAAMRQATSPKTILEYIINFFTCGGIRRRNETQYQELIETMAETLKSTMPDRGAPLPENIILDDMDGCRVEFNLPGENNEAGQVIVRVSKGDHSETREIPLASFEKICRALLFRCEFSLPQDSVILTAQGGMNLKGAVLTGANLTSENLCDADLSGANLEGAVLFMADCEGANFKGANLSGTSLGDSNFKNACLEDSIMCGATLDHANLTGANLQHASLLGCSMIECNCSGANMDHTNLSGATLIRADMSGATLQGATIMAAIMEGAVLTRANLRKASFISTNLDGADLAEANLNNTCFKDCTLTDLRTEDATMSTSTQTLFNEFYSENI.

4 Pentapeptide repeat domains span residues 162–201 (ANLT…NLSG), 202–241 (TSLG…SLLG), 247–286 (CNCS…IMEG), and 287–326 (AVLT…TLTD).

Interacts with the host kinesin light chain (KLC), a subunit of the kinesin-1 motor complex.

It localises to the secreted. It is found in the host membrane. In terms of biological role, effector proteins function to alter host cell physiology and promote bacterial survival in host tissues. Involved in the reorganization of late endosome/lysosome (LE/Lys) compartments in mammalian cells. Necessary and sufficient to link kinesin-1 onto the Salmonella-containing vacuole (SCV) membrane. Required for centrifugal extension of lysosomal glycoprotein-rich membrane tubules, known as Salmonella-induced filaments (Sifs), away from the SCV and toward the cell periphery. Required for virulence, but not for intracellular survival and replication in phagocytic cells. The chain is Secreted effector protein PipB2 (pipB2) from Salmonella typhimurium (strain LT2 / SGSC1412 / ATCC 700720).